The following is a 141-amino-acid chain: Acetyltransferase YpeA (141 aa).

One can recognise an N-acetyltransferase domain in the interval 1-141 (MEIRVFRQED…GKRLIEDEEY (141 aa)).

This sequence belongs to the acetyltransferase family. YpeA subfamily.

This chain is Acetyltransferase YpeA, found in Salmonella choleraesuis (strain SC-B67).